The chain runs to 579 residues: Protein disulfide isomerase-like 1-3 (579 aa).

Residues 1–25 (MASSSTSISLLLFVSFILLLVNSRA) form the signal peptide. Asn-27 carries N-linked (GlcNAc...) asparagine glycosylation. Composition is skewed to basic and acidic residues over residues 44 to 69 (EESK…RDFE) and 80 to 89 (EFHHGDHGYE). Residues 44-91 (EESKEQSHGGGSYHEEEHDHQHRDFENYDDLEQGGGEFHHGDHGYEEE) form a disordered region. A Thioredoxin 1 domain is found at 81-204 (FHHGDHGYEE…IVTWLKKKAS (124 aa)). Asn-108 and Asn-115 each carry an N-linked (GlcNAc...) asparagine glycan. Catalysis depends on nucleophile residues Cys-128 and Cys-131. An intrachain disulfide couples Cys-128 to Cys-131. Residues Asn-209, Asn-293, Asn-313, and Asn-338 are each glycosylated (N-linked (GlcNAc...) asparagine). The Thioredoxin 2 domain maps to 416-546 (DFLADKLKPF…LYKFLKKHAS (131 aa)). Catalysis depends on nucleophile residues Cys-467 and Cys-470. A disulfide bridge links Cys-467 with Cys-470. A glycan (N-linked (GlcNAc...) asparagine) is linked at Asn-520. The tract at residues 558-579 (EPVISTMKSDEKIEGDSSKDEL) is disordered. Residues 565-579 (KSDEKIEGDSSKDEL) are compositionally biased toward basic and acidic residues. A Prevents secretion from ER motif is present at residues 576–579 (KDEL).

This sequence belongs to the protein disulfide isomerase family. Widely expressed.

The protein localises to the endoplasmic reticulum lumen. The catalysed reaction is Catalyzes the rearrangement of -S-S- bonds in proteins.. In terms of biological role, acts as a protein-folding catalyst that interacts with nascent polypeptides to catalyze the formation, isomerization, and reduction or oxidation of disulfide bonds. The polypeptide is Protein disulfide isomerase-like 1-3 (PDIL1-3) (Arabidopsis thaliana (Mouse-ear cress)).